The following is a 66-amino-acid chain: Toxin Tppa1 (66 aa).

The 63-residue stretch at 1–63 (KDGYLVGNDG…TWSRSTNRCG (63 aa)) folds into the LCN-type CS-alpha/beta domain. Intrachain disulfides connect Cys-11–Cys-62, Cys-15–Cys-37, Cys-23–Cys-43, and Cys-27–Cys-45.

Belongs to the long (4 C-C) scorpion toxin superfamily. Sodium channel inhibitor family. Beta subfamily. As to expression, expressed by the venom gland.

It is found in the secreted. Beta toxins bind voltage-independently at site-4 of sodium channels (Nav) and shift the voltage of activation toward more negative potentials thereby affecting sodium channel activation and promoting spontaneous and repetitive firing. This chain is Toxin Tppa1, found in Tityus pachyurus (Colombian scorpion).